Reading from the N-terminus, the 567-residue chain is Glutamine-dependent NAD(+) synthetase (567 aa).

A CN hydrolase domain is found at Leu2–Leu242. Glu41 serves as the catalytic Proton acceptor; for glutaminase activity. Lys109 serves as the catalytic For glutaminase activity. Tyr115 provides a ligand contact to L-glutamine. Cys145 functions as the Nucleophile; for glutaminase activity in the catalytic mechanism. Positions 172 and 178 each coordinate L-glutamine. Residues Pro287–Lys567 form a ligase region. Gly316–Ser323 contacts ATP. Asn399 is a deamido-NAD(+) binding site. Residue Thr423 coordinates ATP. Residues Glu428 and Lys538 each contribute to the deamido-NAD(+) site.

In the C-terminal section; belongs to the NAD synthetase family.

It carries out the reaction deamido-NAD(+) + L-glutamine + ATP + H2O = L-glutamate + AMP + diphosphate + NAD(+) + H(+). It functions in the pathway cofactor biosynthesis; NAD(+) biosynthesis; NAD(+) from deamido-NAD(+) (L-Gln route): step 1/1. Functionally, catalyzes the ATP-dependent amidation of deamido-NAD to form NAD. Uses L-glutamine as a nitrogen source. The polypeptide is Glutamine-dependent NAD(+) synthetase (Aquifex aeolicus (strain VF5)).